Here is a 282-residue protein sequence, read N- to C-terminus: 3-methyl-2-oxobutanoate hydroxymethyltransferase (282 aa).

Mg(2+) contacts are provided by Asp45 and Asp84. 3-methyl-2-oxobutanoate contacts are provided by residues 45–46 (DS), Asp84, and Lys114. Glu116 is a binding site for Mg(2+). Glu183 functions as the Proton acceptor in the catalytic mechanism.

This sequence belongs to the PanB family. Homodecamer; pentamer of dimers. Requires Mg(2+) as cofactor.

The protein resides in the cytoplasm. The enzyme catalyses 3-methyl-2-oxobutanoate + (6R)-5,10-methylene-5,6,7,8-tetrahydrofolate + H2O = 2-dehydropantoate + (6S)-5,6,7,8-tetrahydrofolate. It participates in cofactor biosynthesis; (R)-pantothenate biosynthesis; (R)-pantoate from 3-methyl-2-oxobutanoate: step 1/2. Functionally, catalyzes the reversible reaction in which hydroxymethyl group from 5,10-methylenetetrahydrofolate is transferred onto alpha-ketoisovalerate to form ketopantoate. This is 3-methyl-2-oxobutanoate hydroxymethyltransferase from Syntrophobacter fumaroxidans (strain DSM 10017 / MPOB).